Here is a 241-residue protein sequence, read N- to C-terminus: Thiamine import ATP-binding protein ThiQ (241 aa).

Positions 7–235 (IRLSDVRFSY…AGPEALRHYI (229 aa)) constitute an ABC transporter domain. Residue 37 to 44 (GPSGSGKS) coordinates ATP.

This sequence belongs to the ABC transporter superfamily. Thiamine importer (TC 3.A.1.19.1) family. The complex is composed of two ATP-binding proteins (ThiQ), two transmembrane proteins (ThiP) and a solute-binding protein (ThiB).

Its subcellular location is the cell inner membrane. It carries out the reaction thiamine(out) + ATP + H2O = thiamine(in) + ADP + phosphate + H(+). Functionally, part of the ABC transporter complex ThiBPQ involved in thiamine import. Responsible for energy coupling to the transport system. The protein is Thiamine import ATP-binding protein ThiQ of Brucella abortus biovar 1 (strain 9-941).